A 124-amino-acid chain; its full sequence is Kinocilin (124 aa).

2 helical membrane-spanning segments follow: residues 13–33 (LQLACVALGLVAGSIIIGISV) and 40–60 (MGGVFIGAAVLGLLILAYPFL). Residues 80-124 (PHPGADHGEGRSSTNGNKEGARSSLSTVSRTLEKLKPGTRGAEEC) form a disordered region. Polar residues predominate over residues 90–109 (RSSTNGNKEGARSSLSTVSR). The span at 110 to 124 (TLEKLKPGTRGAEEC) shows a compositional bias: basic and acidic residues.

It is found in the membrane. Functionally, may play a role in stabilizing dense microtubular networks or in vesicular trafficking. The protein is Kinocilin (KNCN) of Homo sapiens (Human).